The primary structure comprises 338 residues: Lipoate-protein ligase A (338 aa).

One can recognise a BPL/LPL catalytic domain in the interval 29-216; that stretch reads PATQRVLFLW…AFFVHYGERV (188 aa). ATP is bound by residues R71, 76–79, and K134; that span reads GAVF. A (R)-lipoate-binding site is contributed by K134.

This sequence belongs to the LplA family. As to quaternary structure, monomer.

The protein resides in the cytoplasm. It catalyses the reaction L-lysyl-[lipoyl-carrier protein] + (R)-lipoate + ATP = N(6)-[(R)-lipoyl]-L-lysyl-[lipoyl-carrier protein] + AMP + diphosphate + H(+). The protein operates within protein modification; protein lipoylation via exogenous pathway; protein N(6)-(lipoyl)lysine from lipoate: step 1/2. It participates in protein modification; protein lipoylation via exogenous pathway; protein N(6)-(lipoyl)lysine from lipoate: step 2/2. Functionally, catalyzes both the ATP-dependent activation of exogenously supplied lipoate to lipoyl-AMP and the transfer of the activated lipoyl onto the lipoyl domains of lipoate-dependent enzymes. The sequence is that of Lipoate-protein ligase A from Salmonella newport (strain SL254).